Consider the following 235-residue polypeptide: DnaA regulatory inactivator Hda (235 aa).

This sequence belongs to the DnaA family. HdA subfamily. In terms of assembly, the active form seems to be an ADP-bound monomer. Forms the RIDA complex (regulatory inactivation of DnaA) of ATP-DnaA, ADP-Hda and the DNA-loaded beta sliding clamp (dnaN).

Functionally, mediates the interaction of DNA replication initiator protein DnaA with DNA polymerase subunit beta sliding clamp (dnaN). Stimulates hydrolysis of ATP-DnaA to ADP-DnaA, rendering DnaA inactive for reinitiation, a process called regulatory inhibition of DnaA or RIDA. This chain is DnaA regulatory inactivator Hda, found in Yersinia pestis bv. Antiqua (strain Antiqua).